Reading from the N-terminus, the 197-residue chain is Large ribosomal subunit protein bL9 (197 aa).

A disordered region spans residues 178-197; the sequence is GEFFDPEAQEDEAAAGETAQ. Acidic residues predominate over residues 181–191; that stretch reads FDPEAQEDEAA.

This sequence belongs to the bacterial ribosomal protein bL9 family.

Its function is as follows. Binds to the 23S rRNA. This chain is Large ribosomal subunit protein bL9, found in Bradyrhizobium sp. (strain BTAi1 / ATCC BAA-1182).